A 160-amino-acid chain; its full sequence is uncharacterized protein (160 aa).

It to A.fulgidus AF1717.

This is an uncharacterized protein from Bacillus subtilis (strain 168).